Consider the following 215-residue polypeptide: MEKKNRLILALDVTDRENALRIANEVSDYVDSIKVGYPLVLGEGLSIVKELVEIAPVIADFKVADIPNTDRLICEHVFNAGAAGIITHGFTGRDSLDSCVKVANEFGTDVYVVTEMSHPGGVEFFRPVAEDIASMAVEAGASGVVAPATRPERVKDIRKIIGEELSIISPGVGAQGGSAADVIRAGADWVIVGRSIYNSDSPAEAAKKICDEMNC.

Substrate contacts are provided by residues Asp12, Lys34, 60–69, Ser117, 170–180, Gly193, and Arg194; these read DFKVADIPNT and PGVGAQGGSAA. Lys62 functions as the Proton donor in the catalytic mechanism.

It belongs to the OMP decarboxylase family. Type 1 subfamily. Homodimer.

The enzyme catalyses orotidine 5'-phosphate + H(+) = UMP + CO2. The protein operates within pyrimidine metabolism; UMP biosynthesis via de novo pathway; UMP from orotate: step 2/2. Functionally, catalyzes the decarboxylation of orotidine 5'-monophosphate (OMP) to uridine 5'-monophosphate (UMP). The protein is Orotidine 5'-phosphate decarboxylase of Methanococcoides burtonii (strain DSM 6242 / NBRC 107633 / OCM 468 / ACE-M).